A 427-amino-acid polypeptide reads, in one-letter code: Histidine--tRNA ligase (427 aa).

The protein belongs to the class-II aminoacyl-tRNA synthetase family. As to quaternary structure, homodimer.

It is found in the cytoplasm. It catalyses the reaction tRNA(His) + L-histidine + ATP = L-histidyl-tRNA(His) + AMP + diphosphate + H(+). The polypeptide is Histidine--tRNA ligase (Deinococcus radiodurans (strain ATCC 13939 / DSM 20539 / JCM 16871 / CCUG 27074 / LMG 4051 / NBRC 15346 / NCIMB 9279 / VKM B-1422 / R1)).